Here is a 215-residue protein sequence, read N- to C-terminus: Pyrrolidone-carboxylate peptidase (215 aa).

Active-site residues include E80, C143, and H167.

Belongs to the peptidase C15 family. As to quaternary structure, homotetramer.

It is found in the cytoplasm. The catalysed reaction is Release of an N-terminal pyroglutamyl group from a polypeptide, the second amino acid generally not being Pro.. Removes 5-oxoproline from various penultimate amino acid residues except L-proline. This is Pyrrolidone-carboxylate peptidase from Bacillus cereus (strain Q1).